An 815-amino-acid polypeptide reads, in one-letter code: Serotype-specific mannosyltransferase WbdA (815 aa).

Residues 1–374 (MSRAIIENAG…WANTAHLAIE (374 aa)) are alpha-(1-&gt;2)-mannosyltransferase. The alpha-(1-&gt;3)-mannosyltransferase stretch occupies residues 431–804 (KLLVDISVLA…WKQSAEFLLK (374 aa)).

The protein belongs to the glycosyltransferase group 1 family. Glycosyltransferase 4 subfamily. As to quaternary structure, monomer. Interacts with the C-terminal region of WbdD.

Its subcellular location is the cell inner membrane. It catalyses the reaction [alpha-D-Man-(1-&gt;3)-alpha-D-Man-(1-&gt;3)-alpha-D-Man-(1-&gt;2)-alpha-D-Man-(1-&gt;2)](n)-alpha-D-Man-(1-&gt;3)-alpha-D-Man-(1-&gt;3)-alpha-D-Man-(1-&gt;3)-alpha-D-GlcNAc-di-trans,octa-cis-undecaprenyl diphosphate + 2 GDP-alpha-D-mannose = alpha-D-Man-(1-&gt;2)-alpha-D-Man-(1-&gt;2)-[alpha-D-Man-(1-&gt;3)-alpha-D-Man-(1-&gt;3)-alpha-D-Man-(1-&gt;2)-alpha-D-Man-(1-&gt;2)](n)-alpha-D-Man-(1-&gt;3)-alpha-D-Man-(1-&gt;3)-alpha-D-Man-(1-&gt;3)-alpha-D-GlcNAc-di-trans,octa-cis-undecaprenyl diphosphate + 2 GDP + 2 H(+). It carries out the reaction alpha-D-Man-(1-&gt;2)-alpha-D-Man-(1-&gt;2)-[alpha-D-Man-(1-&gt;3)-alpha-D-Man-(1-&gt;3)-alpha-D-Man-(1-&gt;2)-alpha-D-Man-(1-&gt;2)](n)-alpha-D-Man-(1-&gt;3)-alpha-D-Man-(1-&gt;3)-alpha-D-Man-(1-&gt;3)-alpha-D-GlcNAc-di-trans,octa-cis-undecaprenyl diphosphate + 2 GDP-alpha-D-mannose = [alpha-D-Man-(1-&gt;3)-alpha-D-Man-(1-&gt;3)-alpha-D-Man-(1-&gt;2)-alpha-D-Man-(1-&gt;2)](n+1)-alpha-D-Man-(1-&gt;3)-alpha-D-Man-(1-&gt;3)-alpha-D-Man-(1-&gt;3)-alpha-D-GlcNAc-di-trans,octa-cis-undecaprenyl diphosphate + 2 GDP + 2 H(+). It participates in bacterial outer membrane biogenesis; LPS O-antigen biosynthesis. In terms of biological role, mannosyltransferase involved in the biosynthesis of the repeat unit of the lipopolysaccharide (LPS) O-antigen region. Catalyzes the polymerization of a tetrasaccharide repeat unit containing two alpha-(1-&gt;3)- and two alpha-(1-&gt;2)-linked mannopyranose residues. This is Serotype-specific mannosyltransferase WbdA from Escherichia coli.